A 489-amino-acid polypeptide reads, in one-letter code: Retinoblastoma-binding protein 5 homolog (489 aa).

WD repeat units follow at residues 22-63 (DCIS…KIIS), 64-103 (AHVHPVCSLSWTRNGHKLLSASTDNNVCIWDVLTGELEHK), 147-187 (DSDG…VVAS), 195-234 (SSATAVKSIEFARRGDAFLINTSDRVIRVYDSKEIITLGK), 248-290 (VNKT…KILH), and 292-330 (TKGELLLDVVWHPVRPIIASISSGLVSIWAQNQVENWSA). A disordered region spans residues 451 to 489 (DVSLPDAPTDETHPLISSKASKDKQQPVGGKKAAGRTKK).

As to quaternary structure, core component of several methyltransferase-containing complexes. Component of the SET1 complex, composed at least of the catalytic subunit Set1, wds/WDR5, Wdr82, Rbbp5, ash2, Cfp1/CXXC1, hcf and Dpy-30L1. Component of the MLL3/4 complex composed at least of the catalytic subunit trr, ash2, Rbbp5, Dpy-30L1, wds, hcf, ptip, Pa1, Utx, Lpt and Ncoa6.

It localises to the nucleus. Functionally, component of the SET1 complex that specifically di- and trimethylates 'Lys-4' of histone H3 and of the MLL3/4 complex which also methylates histone H3 'Lys-4'. This is Retinoblastoma-binding protein 5 homolog from Drosophila melanogaster (Fruit fly).